The following is a 424-amino-acid chain: Neurotensin receptor type 1 (424 aa).

The interval 1–23 (MHLNSSVPQGTPGEPDAQPFSGP) is disordered. Over 1–68 (MHLNSSVPQG…TDIYSKVLVT (68 aa)) the chain is Extracellular. N-linked (GlcNAc...) asparagine glycans are attached at residues Asn4, Asn38, and Asn42. The helical transmembrane segment at 69-89 (AIYLALFVVGTVGNSVTAFTL) threads the bilayer. Over 90–103 (ARKKSLQSLQSTVH) the chain is Cytoplasmic. Residues 104 to 123 (YHLGSLALSDLLILLLAMPV) form a helical membrane-spanning segment. Topologically, residues 124-143 (ELYNFIWVHHPWAFGDAGCR) are extracellular. Cys142 and Cys225 are disulfide-bonded. The chain crosses the membrane as a helical span at residues 144–165 (GYYFLRDACTYATALNVASLSV). Topologically, residues 166–185 (ERYLAICHPFKAKTLMSRSR) are cytoplasmic. The helical transmembrane segment at 186-206 (TKKFISAIWLASALLAIPMLF) threads the bilayer. At 207-235 (TMGLQNRSGDGTHPGGLVCTPIVDTATVK) the chain is on the extracellular side. The helical transmembrane segment at 236 to 260 (VVIQVNTFMSFLFPMLVISILNTVI) threads the bilayer. Topologically, residues 261–308 (ANKLTVMVHQAAEQGRVCTVGTHNGLEHSTFNMTIEPGRVQALRHGVL) are cytoplasmic. A helical transmembrane segment spans residues 309-330 (VLRAVVIAFVVCWLPYHVRRLM). Positions 326 to 349 (VRRLMFCYISDEQWTTFLFDFYHY) are neurotensin binding. Residues 331–348 (FCYISDEQWTTFLFDFYH) lie on the Extracellular side of the membrane. A helical membrane pass occupies residues 349-369 (YFYMLTNALFYVSSAINPILY). At 370–424 (NLVSANFRQVFLSTLACLCPGWRHRRKKRPTFSRKPNSMSSNHAFSTSATRETLY) the chain is on the cytoplasmic side. S-palmitoyl cysteine attachment occurs at residues Cys386 and Cys388. The interval 397 to 424 (KRPTFSRKPNSMSSNHAFSTSATRETLY) is disordered. Over residues 403 to 424 (RKPNSMSSNHAFSTSATRETLY) the composition is skewed to polar residues.

The protein belongs to the G-protein coupled receptor 1 family. Neurotensin receptor subfamily. NTSR1 sub-subfamily. Interacts (palmitoylated form) with GNA11. N-glycosylated. Post-translationally, palmitoylated; this is required for normal localization at membrane rafts and normal GNA11-mediated activation of down-stream signaling cascades. The palmitoylation level increases in response to neurotensin treatment. As to expression, detected in brain and small intestine.

It is found in the cell membrane. Its subcellular location is the membrane raft. Its function is as follows. G-protein coupled receptor for the tridecapeptide neurotensin (NTS). Signaling is effected via G proteins that activate a phosphatidylinositol-calcium second messenger system. Signaling leads to the activation of downstream MAP kinases and protects cells against apoptosis. This Rattus norvegicus (Rat) protein is Neurotensin receptor type 1 (Ntsr1).